Here is a 422-residue protein sequence, read N- to C-terminus: Testin (422 aa).

The 108-residue stretch at 92–199 (MILTSPVAAK…GDVKLPKEVE (108 aa)) folds into the PET domain. The segment at 135-165 (QPVAGSEGAQYRKKQLAKQLPAHDQDPSKCH) is disordered. The span at 155 to 165 (PAHDQDPSKCH) shows a compositional bias: basic and acidic residues. 3 consecutive LIM zinc-binding domains span residues 234 to 299 (YYCF…SEKP), 300 to 359 (RCAG…NHAV), and 360 to 422 (SCQG…KMSS).

This sequence belongs to the prickle / espinas / testin family. As to expression, expressed in the animal hemisphere at the 4-cell stage. By stage 18, expressed in cells adjacent to the anterior neural plate. In late neurula, expressed in the cranial neural crest. At tail bud stages, expressed strongly in the head, ventral to the developing eye, branchial arches and lateral line placodes. Also localized in the otic vesicle, dorsal fin and notochord with weaker expression at intersomitic junctions of tail bud embryos.

It is found in the cytoplasm. The protein resides in the cell cortex. It localises to the cell junction. The protein localises to the focal adhesion. In terms of biological role, scaffold protein that may play a role in cell adhesion, cell spreading and in the reorganization of the actin cytoskeleton. May inhibit cell growth. Regulates cranial neural crest migration. Acts together with prickle1 to control axial elongation. The sequence is that of Testin from Xenopus laevis (African clawed frog).